The chain runs to 428 residues: Phosphoribosylamine--glycine ligase (428 aa).

Residues 107-313 (KQVMKTYNIP…LVNVIESLLD (207 aa)) enclose the ATP-grasp domain. Position 133-194 (133-194 (VEAEGVPIVI…EEYLEGEELS (62 aa))) interacts with ATP. Positions 283 and 285 each coordinate Mg(2+).

This sequence belongs to the GARS family. The cofactor is Mg(2+). Mn(2+) serves as cofactor.

It carries out the reaction 5-phospho-beta-D-ribosylamine + glycine + ATP = N(1)-(5-phospho-beta-D-ribosyl)glycinamide + ADP + phosphate + H(+). It functions in the pathway purine metabolism; IMP biosynthesis via de novo pathway; N(1)-(5-phospho-D-ribosyl)glycinamide from 5-phospho-alpha-D-ribose 1-diphosphate: step 2/2. In Halalkalibacterium halodurans (strain ATCC BAA-125 / DSM 18197 / FERM 7344 / JCM 9153 / C-125) (Bacillus halodurans), this protein is Phosphoribosylamine--glycine ligase.